Here is a 591-residue protein sequence, read N- to C-terminus: MALFLARHTLSGTGAGCHGRGPAPDVSEVDLTLQALGERGFSRLLDLGLACLDLSYVEMREFVVWGRPPASEAAVASTPGSLFRSHSSAYWLSEVERPGGLVRWARSQTSPSSLTLAPHLGPSLLSLSVVTGGGCGAVAFCNAFFLAYFLVVRSVFPAFSDRIAAWICDRSPFCENTRAVARGYRGLVKRFLAFVFERSSYDPPLLRQNSRPVERCFAIKNYVPGLDSQSCVTVPSFSRWAQSHASELDPREIRDRVTPATAPSFVADHASALLASLQKKASDTPCGNPIQWMWYRLLVNSCLRSAHCLLPIPAVSEGGRKTGGGVGEELVGAGGPCLSRDVFVAIVSRNVLSCLLNVPAAGPRAYKCFRSHASRPVSGPDYPPLAVFCMDCGYCLNFGKQTGVGGRLNSFRPTLQFYPRDQKEKHVLTCHASGRVYCSNCGSAAVGCQRLAEPPSARSGWRPRIRAVLPHNAAYELDRGSRLLDAIIPCLGPDRTCMRPVVLRGVTVRQLLYLTLRTEARAVCSICQQRQAPEDARDEPHLFSSCLEVELPPGERCAGCRLYQTRYGTPAAQAHPPGEAGGGFSRQSPAS.

Positions 571–591 (AAQAHPPGEAGGGFSRQSPAS) are disordered.

The protein belongs to the Epstein-Barr virus BFRF2 family. Part of a trimeric complex composed of BGLF3, BFRF2 and BVLF1.

Functionally, part of the viral pre-initiation complex (vPIC) that is responsible for the expression of vPIC-dependent late genes. vPIC is composed of at least BcRF1 that binds the viral TATT box, BDLF3.5, BDLF4, BFRF2, BGLF3, BGLF4 and BVLF1. The sequence is that of Late gene expression regulator BFRF2 from Homo sapiens (Human).